A 171-amino-acid polypeptide reads, in one-letter code: Serine acetyltransferase (171 aa).

The protein belongs to the transferase hexapeptide repeat family.

It localises to the cytoplasm. The catalysed reaction is L-serine + acetyl-CoA = O-acetyl-L-serine + CoA. It participates in amino-acid biosynthesis; L-cysteine biosynthesis; L-cysteine from L-serine: step 1/2. This chain is Serine acetyltransferase (cysE), found in Helicobacter pylori (strain J99 / ATCC 700824) (Campylobacter pylori J99).